Reading from the N-terminus, the 425-residue chain is Nuclear hormone receptor family member nhr-13 (425 aa).

The segment at residues 5 to 83 (PNSCEVCSSS…IGMKPLLVKS (79 aa)) is a DNA-binding region (nuclear receptor). 2 NR C4-type zinc fingers span residues 11 to 30 (CSSSSNSSCNHFGARTCKAC) and 46 to 71 (CIDQPDACRVHCDSRVICRFCRLKKC). The segment at 108–148 (VKENSEEIQNDDDPQESDAEMENESTPGPSSEPSENVSAEN) is disordered. A compositionally biased stretch (acidic residues) spans 113–130 (EEIQNDDDPQESDAEMEN). Low complexity predominate over residues 131 to 142 (ESTPGPSSEPSE). Residues 147–414 (ENQETVTKFL…KSMISLTSFW (268 aa)) enclose the NR LBD domain.

It belongs to the nuclear hormone receptor family. As to quaternary structure, may interact with nuclear hormone receptor nhr-49.

Its subcellular location is the nucleus. Orphan nuclear receptor. Involved in regulating fatty acid desaturase genes, acting in concert with nuclear hormone receptor nhr-49. This Caenorhabditis elegans protein is Nuclear hormone receptor family member nhr-13 (nhr-13).